Consider the following 388-residue polypeptide: Arrestin-C (388 aa).

It belongs to the arrestin family. Homodimer; disulfide-linked in response to retinal illumination. Interacts with CXCR4; the interaction is dependent on the C-terminal phosphorylation of CXCR4 and modulates the calcium ion mobilization activity of CXCR4. Interacts with GPR84. Inner and outer segments, and the inner plexiform regions of the retina.

Its subcellular location is the photoreceptor inner segment. The protein localises to the cell projection. It localises to the cilium. It is found in the photoreceptor outer segment. In terms of biological role, may play a role in an as yet undefined retina-specific signal transduction. Could bind to photoactivated-phosphorylated red/green opsins. The sequence is that of Arrestin-C (ARR3) from Homo sapiens (Human).